A 403-amino-acid chain; its full sequence is MADFFQNGVITTLQNFRNRSLEELEYELELFSKRRNMVLLLPALYSEFEGPAMPKIIQELKDIRYLYKIVLSLDRATEEEFKKVKKIMSEINTEVKVIWHDGPRMQRLYRELEEAGFNVSIPGKGRSVWMSLGYILSDADAYAIALHDCDIVNYSRELPARLLYPVVHPALDFEFSKGYYARVTHKLYGRVTRIFYTPLIRALIRILGCNRFLVYLDSFRYALSGEFAFIRTLARGIRISPTWGLEVSMLSEVYQNTSFNRICQVEVMDTYEHKHQKLVKSTSEGLVKMASDIAKTLFRVLAHDGFVFSEAFFRTLLTTYLQEARYAIEKYNALSLINGLTYDRHAEIEAIEVFVDALKKAEKEFIEDPIGVPLMSAWVRVRAALPEISDKLIRAVEEDNSDD.

A divalent metal cation is bound at residue D150. 189-192 (GRVT) is a (2R)-3-phosphoglycerate binding site. Position 273 (H273) interacts with a divalent metal cation.

This sequence belongs to the glycosyltransferase 2 family. In terms of assembly, homodimer. The cofactor is Mn(2+). Requires Co(2+) as cofactor. It depends on Mg(2+) as a cofactor. Ni(2+) serves as cofactor.

It carries out the reaction an NDP-alpha-D-glucose + (2R)-3-phosphoglycerate = (2R)-2-O-(alpha-D-glucopyranosyl)-3-phospho-glycerate + a ribonucleoside 5'-diphosphate + H(+). Its function is as follows. Involved in the biosynthesis of 6-O-methylglucose lipopolysaccarides (MGLPs). Catalyzes the transfer of a glucose (Glc) moiety from uridine diphosphate (UDP-Glc) to the position 2 of 3-phospho-D-glycerate (3-PGA) to form glucosyl-3-phosphoglycerate (GPG). GpgS is most active with UDP-glucose, followed by GDP-glucose, ADP-glucose, and to a lesser extent, TDP-glucose. 3-PGA is the only acceptor for these glucosyl donors. The protein is Glucosyl-3-phosphoglycerate synthase of Persephonella marina (strain DSM 14350 / EX-H1).